The chain runs to 117 residues: Hydrogenase maturation factor HypA (117 aa).

Histidine 2 contributes to the Ni(2+) binding site. Zn(2+)-binding residues include cysteine 73, cysteine 76, cysteine 89, and cysteine 92.

This sequence belongs to the HypA/HybF family.

Involved in the maturation of [NiFe] hydrogenases. Required for nickel insertion into the metal center of the hydrogenase. This Pelodictyon phaeoclathratiforme (strain DSM 5477 / BU-1) protein is Hydrogenase maturation factor HypA.